Reading from the N-terminus, the 972-residue chain is 116 kDa U5 small nuclear ribonucleoprotein component (972 aa).

Positions 1 to 53 (MDTDLYDEFGNYIGPELDSDDEDDELGRESKELDELEDDDDDDDMGDHDEDHP) are disordered. Acidic residues-rich tracts occupy residues 17-26 (LDSDDEDDEL) and 34-48 (DELE…MGDH). One can recognise a tr-type G domain in the interval 127-409 (ELIRNVTLCG…GIHLTKEELK (283 aa)). GTP is bound by residues 136-143 (GHLHHGKT), 204-208 (DTPGH), and 258-261 (NKID).

This sequence belongs to the TRAFAC class translation factor GTPase superfamily. Classic translation factor GTPase family. EF-G/EF-2 subfamily. As to quaternary structure, component of the U5 snRNP and the U4/U6-U5 tri-snRNP complex, a building block of the spliceosome. Component of the pre-catalytic, catalytic and post-catalytic spliceosome complexes. Component of the minor spliceosome, which splices U12-type introns.

It is found in the nucleus. Required for pre-mRNA splicing as component of the spliceosome, including pre-catalytic, catalytic and post-catalytic spliceosomal complexes. Component of the U5 snRNP and the U4/U6-U5 tri-snRNP complex, a building block of the spliceosome. As a component of the minor spliceosome, involved in the splicing of U12-type introns in pre-mRNAs. The sequence is that of 116 kDa U5 small nuclear ribonucleoprotein component (EFTUD2) from Gallus gallus (Chicken).